Reading from the N-terminus, the 1175-residue chain is Beta-agarase AgaO (1175 aa).

An N-terminal signal peptide occupies residues 1-29; the sequence is MRLSKSQGILPLAHAVLAAAIAYSTAATA. The CBM6 1 domain occupies 32–164; it reads YRLEAEDFTN…QWNLDKMELA (133 aa). Residues 169 to 208 form a disordered region; it reads SSSSSGGGSTSSSSSGGSSSSSGSGSSSSGGSPEEGGHVS. Over residues 178-200 the composition is skewed to low complexity; sequence TSSSSSGGSSSSSGSGSSSSGGS. The 129-residue stretch at 211–339 folds into the CBM6 2 domain; that stretch reads FKLEAESAHH…QFNIDYVIFE (129 aa). Positions 355-481 are disordered; the sequence is IADVNDSCPG…ESGCSPSQVA (127 aa). Residues 382–393 are compositionally biased toward basic and acidic residues; sequence DTDKDGIADNRD. The segment covering 471-481 has biased composition (polar residues); that stretch reads NESGCSPSQVA. Residue E661 is the Proton donor of the active site. The active-site Nucleophile is E832.

This sequence belongs to the glycosyl hydrolase 86 family.

It catalyses the reaction Hydrolysis of (1-&gt;4)-beta-D-galactosidic linkages in agarose, giving the tetramer as the predominant product.. Activity and stability are strongly enhanced by CaCl(2). Activity is not affected by sulfhydryl inhibitors such as iodoacetoamide and p-chloromercuribenzoate or by thiol reagents such as dithiothreitol and 2-mercaptoethanol. Strongly inhibited by N-bromosuccinimide and sodium dodecyl sulfate. Endo-type beta-agarase, which degrades agarose and agarose oligosaccharides more polymerized than hexamers to yield neoagarohexaose (NA6) as the main product, with lesser amounts of neoagarotetraose (NA4) and neoagarobiose (NA2). This chain is Beta-agarase AgaO, found in Microbulbifer thermotolerans.